Consider the following 314-residue polypeptide: MKKEDKDWIELTIITSSQAVEAVSAILYNTDVQGIAIEDSKDVEFQKKNKGDWDYFDETLINIEEGAVIKAYYREDKNFMKYLKYIEESVKNLEQLGFDKGKGIVTTSKVNEEDWENNWKKYYKPTKVGEKIVIKPIWEEYGENPEEIILELDPGMAFGTGTHETTRMCIESLEKYVKEEDVVFDIGTGSGILGIAAAKLNAKKVIGVDLDEVAVDSAKKNVGFNHLDNIEILHGDLMEVVKGKCNIIVANIIADIIILLSKDVKKFLEDGGYFISSGIIKDRKEEVVDSLKENGFKIEEIKEQGEWVCVVASL.

S-adenosyl-L-methionine-binding residues include T166, G187, D209, and N251.

This sequence belongs to the methyltransferase superfamily. PrmA family.

The protein resides in the cytoplasm. The catalysed reaction is L-lysyl-[protein] + 3 S-adenosyl-L-methionine = N(6),N(6),N(6)-trimethyl-L-lysyl-[protein] + 3 S-adenosyl-L-homocysteine + 3 H(+). Functionally, methylates ribosomal protein L11. The chain is Ribosomal protein L11 methyltransferase from Clostridium tetani (strain Massachusetts / E88).